Consider the following 328-residue polypeptide: Putative potassium channel protein YugO (328 aa).

A run of 3 helical transmembrane segments spans residues 19 to 39 (IGVI…ILEP), 42 to 62 (FTSV…VGYG), and 73 to 93 (AAGI…FATL). An RCK N-terminal domain is found at 114 to 238 (RDHIILIGWN…ERAGANQIIG (125 aa)).

The protein resides in the cell membrane. This is Putative potassium channel protein YugO (yugO) from Bacillus subtilis (strain 168).